The chain runs to 454 residues: tRNA modification GTPase MnmE (454 aa).

Positions 23, 80, and 120 each coordinate (6S)-5-formyl-5,6,7,8-tetrahydrofolate. Residues 216 to 377 form the TrmE-type G domain; that stretch reads GMKVVIAGRP…LRDHLKQSMG (162 aa). Residue Asn226 participates in K(+) binding. Residues 226-231, 245-251, 270-273, 335-338, and 358-360 each bind GTP; these read NAGKSS, TDIAGTT, DTAG, NKAD, and SAR. Residue Ser230 coordinates Mg(2+). Residues Thr245, Ile247, and Thr250 each contribute to the K(+) site. Thr251 contributes to the Mg(2+) binding site. (6S)-5-formyl-5,6,7,8-tetrahydrofolate is bound at residue Lys454.

This sequence belongs to the TRAFAC class TrmE-Era-EngA-EngB-Septin-like GTPase superfamily. TrmE GTPase family. Homodimer. Heterotetramer of two MnmE and two MnmG subunits. It depends on K(+) as a cofactor.

The protein resides in the cytoplasm. Functionally, exhibits a very high intrinsic GTPase hydrolysis rate. Involved in the addition of a carboxymethylaminomethyl (cmnm) group at the wobble position (U34) of certain tRNAs, forming tRNA-cmnm(5)s(2)U34. In Yersinia pestis bv. Antiqua (strain Antiqua), this protein is tRNA modification GTPase MnmE.